A 688-amino-acid polypeptide reads, in one-letter code: Small ribosomal subunit protein mS39 (688 aa).

A mitochondrion-targeting transit peptide spans Met-1–Tyr-37. The residue at position 126 (Lys-126) is an N6-acetyllysine. 10 PPR repeats span residues Ile-149–Val-183, Ser-184–Glu-219, Asn-258–Ala-292, Asp-293–Pro-333, Asn-334–Pro-370, Ser-371–Asp-412, Asp-415–Lys-449, Arg-457–Pro-491, His-492–Phe-526, and Pro-575–Pro-609. The disordered stretch occupies residues Gly-667–Lys-688.

It belongs to the mitochondrion-specific ribosomal protein mS39 family. In terms of assembly, component of the mitochondrial ribosome small subunit (28S) which comprises a 12S rRNA and about 30 distinct proteins. Associated with the 12S mitochondrial rRNA (12S mt-rRNA).

It localises to the mitochondrion. Its function is as follows. Mitochondrial RNA-binding protein that has a role in mitochondrial translation. The protein is Small ribosomal subunit protein mS39 (PTCD3) of Bos taurus (Bovine).